A 163-amino-acid polypeptide reads, in one-letter code: ATP synthase subunit b 1 (163 aa).

The chain crosses the membrane as a helical span at residues 5 to 25; it reads LDATFFAFVGLVLFLALVVYL.

It belongs to the ATPase B chain family. F-type ATPases have 2 components, F(1) - the catalytic core - and F(0) - the membrane proton channel. F(1) has five subunits: alpha(3), beta(3), gamma(1), delta(1), epsilon(1). F(0) has three main subunits: a(1), b(2) and c(10-14). The alpha and beta chains form an alternating ring which encloses part of the gamma chain. F(1) is attached to F(0) by a central stalk formed by the gamma and epsilon chains, while a peripheral stalk is formed by the delta and b chains.

The protein localises to the cell inner membrane. In terms of biological role, f(1)F(0) ATP synthase produces ATP from ADP in the presence of a proton or sodium gradient. F-type ATPases consist of two structural domains, F(1) containing the extramembraneous catalytic core and F(0) containing the membrane proton channel, linked together by a central stalk and a peripheral stalk. During catalysis, ATP synthesis in the catalytic domain of F(1) is coupled via a rotary mechanism of the central stalk subunits to proton translocation. Its function is as follows. Component of the F(0) channel, it forms part of the peripheral stalk, linking F(1) to F(0). This chain is ATP synthase subunit b 1, found in Rhizobium etli (strain CIAT 652).